Here is a 682-residue protein sequence, read N- to C-terminus: Potassium-transporting ATPase ATP-binding subunit (682 aa).

Transmembrane regions (helical) follow at residues 34 to 54 (PVMF…LAMV), 58 to 78 (IAGS…TVLF), 219 to 239 (IALT…TATL), and 254 to 274 (VLVA…LSAI). The active-site 4-aspartylphosphate intermediate is D307. ATP-binding positions include D344, E348, 377–384 (FTAQSRMS), and K395. 2 residues coordinate Mg(2+): D518 and D522. The next 3 membrane-spanning stretches (helical) occupy residues 588–608 (FAII…LNVM), 616–636 (AILS…PLAL), and 662–682 (LVVP…LGLA).

The protein belongs to the cation transport ATPase (P-type) (TC 3.A.3) family. Type IA subfamily. The system is composed of three essential subunits: KdpA, KdpB and KdpC.

It is found in the cell inner membrane. It catalyses the reaction K(+)(out) + ATP + H2O = K(+)(in) + ADP + phosphate + H(+). Part of the high-affinity ATP-driven potassium transport (or Kdp) system, which catalyzes the hydrolysis of ATP coupled with the electrogenic transport of potassium into the cytoplasm. This subunit is responsible for energy coupling to the transport system and for the release of the potassium ions to the cytoplasm. This Salmonella choleraesuis (strain SC-B67) protein is Potassium-transporting ATPase ATP-binding subunit.